Consider the following 284-residue polypeptide: T-cell leukemia homeobox protein 2 (284 aa).

Disordered stretches follow at residues 1-50 (MEPG…NGAF), 78-106 (GGVIRVPAHRPLPVPPPAGGAPAVPGPSG), and 139-166 (FSGTRRIGHPYQNRTPPKRKKPRTSFSR). Residues 30–50 (TPGGGLGLGRGGQGHGENGAF) show a composition bias toward gly residues. Positions 87 to 96 (RPLPVPPPAG) are enriched in pro residues. The homeobox DNA-binding region spans 157 to 216 (RKKPRTSFSRSQVLELERRFLRQKYLASAERAALAKALRMTDAQVKTWFQNRRTKWRRQT).

Its subcellular location is the nucleus. In terms of biological role, transcription activator that binds DNA elements with the consensus sequence 5'-CGGTAATTGG-3'. Binds DNA via its homeobox. Required for normal cell death of enteric neurons in the gastrointestinal tract. Required for normal development of the enteric nervous system, and for proper development of normal motility of the gastrointestinal tract. The sequence is that of T-cell leukemia homeobox protein 2 (TLX2) from Homo sapiens (Human).